The primary structure comprises 815 residues: MAHTVQTLSKLLKKTPDEVVTILANAGVDGKNSDSVISAEERKILMSSLSKRPIRRSSMSVFRKAGTKSNAVSVSDVKVKVRSKRLTQPITMIDEQSKVVANEMARAALAALDAGRNADEILLAQDARRLEMVRLQKAQVEVVEIQKETVKKVQEKEAEKKVEKLKTADKPKEGNKPKRLRNTSSDNNTRKQLHVARHNPNRRLKKKDRTHLSQKIQAEQAQHAFQKPIEKVIHEVAIVGNIKVTELAQKMATKAGEVLKVLMGMGVMVTLNDVIDQDTALLVVEEMGHKGIISVEETIEDVLIEQLKYNEHESARPPIVTIMGHVDHGKTSLLDYIRQAKVAHGEVGGITQHIGAYQVQSNGNIITFIDTPGHAAFSKMRFRGANVTDIVILVVAADDGVMPQTIESIKHTQIVGVPMIVAINKIDKEGTDVDKIKQVLSTYDVISEDWGGDVIMVPVSAHTGEGVDALLDAISLTAEILEFSAVSEGPAHGTVLEARLEKGRGKVTTILVQSGTLNKGDIMIAGFEYGKVKQIVDDKGKILKLAMPSMPVEVLGLSGVPNSGDEVIVVGSERKAREVADFRKSKDREVQLQKQQASKMENFLMKMEKGDISTVNVLLKADVRGSAQALIEALEELSTDEVRVKVVSSGVGGINNTDITLAATSSALVLGFNVRADAVARKTADNEGVRVEYYSIIYNLINDVKAIMSGLLSPELSENIIGIASVKNIFKSQKMGDIAGCMVDEGMVKRDSLIRVLRDSVVIFDGKLESLRRFKDDVNEVKSGTECGIGVLNYTDVQPGDQIEIFERVERARIL.

The segment covering 153–176 (VQEKEAEKKVEKLKTADKPKEGNK) has biased composition (basic and acidic residues). Residues 153–219 (VQEKEAEKKV…THLSQKIQAE (67 aa)) form a disordered region. A compositionally biased stretch (basic residues) spans 191–209 (KQLHVARHNPNRRLKKKDR). The tr-type G domain maps to 315-482 (ARPPIVTIMG…AISLTAEILE (168 aa)). Residues 324-331 (GHVDHGKT) form a G1 region. Position 324–331 (324–331 (GHVDHGKT)) interacts with GTP. The tract at residues 349–353 (GITQH) is G2. The G3 stretch occupies residues 370-373 (DTPG). Residues 370–374 (DTPGH) and 424–427 (NKID) each bind GTP. A G4 region spans residues 424–427 (NKID). The interval 460–462 (SAH) is G5.

It belongs to the TRAFAC class translation factor GTPase superfamily. Classic translation factor GTPase family. IF-2 subfamily.

It is found in the cytoplasm. Its function is as follows. One of the essential components for the initiation of protein synthesis. Protects formylmethionyl-tRNA from spontaneous hydrolysis and promotes its binding to the 30S ribosomal subunits. Also involved in the hydrolysis of GTP during the formation of the 70S ribosomal complex. The polypeptide is Translation initiation factor IF-2 (Vesicomyosocius okutanii subsp. Calyptogena okutanii (strain HA)).